The chain runs to 275 residues: MSIRLYKSYTPGTRNRALSAFSEITTDKPEKSLVKKNHRNKGRNNRGVITIRHRGGGHKKQYRLIDFKRNKYNISAVVNSIEYDPNRNARIALLHFTDGEKRYILHPNNLNVGDTILSGKGISLDIGNSLPLEEIPLGSSVHNIELIPNRGGQIVRSAGTSAKILAKEGNYVTLRLPSKEIRLIRKECFATIGEVSNNDAFLIQSGKAGRTRWLGKRPTVRGSVMNPCDHPHGGGEGRTPIGRTRPLTPWGKPALGKKTRKTKKLSSAYILRRRS.

A disordered region spans residues 219 to 267 (TVRGSVMNPCDHPHGGGEGRTPIGRTRPLTPWGKPALGKKTRKTKKLSS). The segment covering 255–264 (LGKKTRKTKK) has biased composition (basic residues).

This sequence belongs to the universal ribosomal protein uL2 family. In terms of assembly, part of the 50S ribosomal subunit.

The protein localises to the plastid. The protein resides in the chloroplast. The protein is Large ribosomal subunit protein uL2c (rpl2) of Thalassiosira pseudonana (Marine diatom).